The following is a 1313-amino-acid chain: Angiotensin-converting enzyme (1313 aa).

Positions 1 to 35 (MGAASGQRGRWPLSPPLLMLSLLLLLLLPPSPAPA) are cleaved as a signal peptide. At 36-1265 (LDPGLQPGNF…LEPQQARVGQ (1230 aa)) the chain is on the extracellular side. Residues Asn-44, Asn-60, Asn-80, Asn-117, Asn-152, and Asn-166 are each glycosylated (N-linked (GlcNAc...) asparagine). Peptidase M2 domains follow at residues 46-630 (SADE…LGWP) and 649-1228 (ETDE…LGWP). An intrachain disulfide couples Cys-163 to Cys-171. Tyr-237 serves as a coordination point for chloride. An N-linked (GlcNAc...) asparagine glycan is attached at Asn-324. Cys-365 and Cys-383 are joined by a disulfide. Residue His-396 coordinates Zn(2+). Glu-397 serves as the catalytic Proton acceptor 1. Zn(2+)-binding residues include His-400 and Glu-424. The N-linked (GlcNAc...) asparagine glycan is linked to Asn-515. His-526 (proton donor 1) is an active-site residue. Residue Arg-535 participates in chloride binding. Residues Cys-551 and Cys-563 are joined by a disulfide bond. 4 N-linked (GlcNAc...) asparagine glycosylation sites follow: Asn-683, Asn-701, Asn-720, and Asn-766. A disulfide bond links Cys-763 and Cys-769. Chloride contacts are provided by Arg-797 and Tyr-835. N-linked (GlcNAc...) asparagine glycosylation is present at Asn-948. A disulfide bond links Cys-963 and Cys-981. His-994 is a Zn(2+) binding site. The active-site Proton acceptor 2 is Glu-995. The Zn(2+) site is built by His-998 and Glu-1022. Residues Trp-1096 and Arg-1100 each coordinate chloride. His-1124 acts as the Proton donor 2 in catalysis. Residue Arg-1133 coordinates chloride. Residues Cys-1149 and Cys-1161 are joined by a disulfide bond. A glycan (N-linked (GlcNAc...) asparagine) is linked at Asn-1197. The tract at residues 1221-1262 (HGETLGWPEYTWTPNTARAEGSLPESSRVNFLGMYLEPQQAR) is juxtamembrane stalk. Residues 1266 to 1282 (WVLLFLGVALLVATVGL) form a helical membrane-spanning segment. Over 1283–1313 (AHRLYNIHNHHSLRRPHRGPQFGSEVELRHS) the chain is Cytoplasmic. Position 1306 is a phosphoserine (Ser-1306).

It belongs to the peptidase M2 family. As to quaternary structure, monomer and homodimer; homodimerizes following binding to an inhibitor. Interacts with calmodulin (CALM1, CALM2 or CALM3); interaction takes place in the cytoplasmic region and regulates phosphorylation and proteolytic cleavage. The cofactor is Zn(2+). It depends on chloride as a cofactor. Produced following proteolytic cleavage by secretase enzymes that cleave the transmembrane form in the juxtamembrane stalk region upstream of the transmembrane region. Cleavage can take place at different sites of the juxtamembrane stalk region. In terms of processing, phosphorylated by CK2 on Ser-1306; which allows membrane retention. Phosphorylated on tyrosine residues on its extracellular part, promoting cleavage by secretase enzymes and formation of the soluble form (Angiotensin-converting enzyme, soluble form). As to expression, expressed in brain, kidney, lung, skeletal muscle and heart. Testis-specific isoform is expressed in spermatocytes, adult testis.

The protein localises to the cell membrane. It is found in the cytoplasm. Its subcellular location is the secreted. It carries out the reaction Release of a C-terminal dipeptide, oligopeptide-|-Xaa-Yaa, when Xaa is not Pro, and Yaa is neither Asp nor Glu. Thus, conversion of angiotensin I to angiotensin II, with increase in vasoconstrictor activity, but no action on angiotensin II.. The enzyme catalyses angiotensin I + H2O = L-histidyl-L-leucine + angiotensin II. It catalyses the reaction bradykinin + H2O = L-Phe-L-Arg + bradykinin(1-7). The catalysed reaction is substance P + H2O = substance P(1-9) + L-Leu-L-Met-NH2. It carries out the reaction substance P + H2O = substance P(1-8) + Gly-L-Leu-L-Met-NH2. The enzyme catalyses substance P + H2O = L-Phe-L-Phe-Gly-L-Leu-L-Met-NH2 + substance P(1-6). It catalyses the reaction neurotensin + H2O = neurotensin(1-11) + L-isoleucyl-L-leucine. The catalysed reaction is goralatide + H2O = N-acetyl-L-seryl-L-aspartate + L-lysyl-L-proline. It carries out the reaction Met-enkephalin + H2O = L-phenylalanyl-L-methionine + L-tyrosylglycylglycine. The enzyme catalyses Leu-enkephalin + H2O = L-tyrosylglycylglycine + L-phenylalanyl-L-leucine. It catalyses the reaction Met-enkephalin-Arg-Phe + H2O = L-arginyl-L-phenylalanine + Met-enkephalin. With respect to regulation, the dipeptidyl carboxypeptidase activity is strongly activated by chloride. The dipeptidyl carboxypeptidase activity is specifically inhibited by lisinopril, captopril and enalaprilat. Its activity is regulated as follows. Strongly inhibited by lisinopril and captopril. Functionally, dipeptidyl carboxypeptidase that removes dipeptides from the C-terminus of a variety of circulating hormones, such as angiotensin I, bradykinin or enkephalins, thereby playing a key role in the regulation of blood pressure, electrolyte homeostasis or synaptic plasticity. Composed of two similar catalytic domains, each possessing a functional active site, with different selectivity for substrates. Plays a major role in the angiotensin-renin system that regulates blood pressure and sodium retention by the kidney by converting angiotensin I to angiotensin II, resulting in an increase of the vasoconstrictor activity of angiotensin. Also able to inactivate bradykinin, a potent vasodilator, and therefore enhance the blood pressure response. Acts as a regulator of synaptic transmission by mediating cleavage of neuropeptide hormones, such as substance P, neurotensin or enkephalins. Catalyzes degradation of different enkephalin neuropeptides (Met-enkephalin, Leu-enkephalin, Met-enkephalin-Arg-Phe and possibly Met-enkephalin-Arg-Gly-Leu). Acts as a regulator of synaptic plasticity in the nucleus accumbens of the brain by mediating cleavage of Met-enkephalin-Arg-Phe, a strong ligand of Mu-type opioid receptor OPRM1, into Met-enkephalin. Met-enkephalin-Arg-Phe cleavage by ACE decreases activation of OPRM1, leading to long-term synaptic potentiation of glutamate release. Also acts as a regulator of hematopoietic stem cell differentiation by mediating degradation of hemoregulatory peptide N-acetyl-SDKP (AcSDKP). Acts as a regulator of cannabinoid signaling pathway by mediating degradation of hemopressin, an antagonist peptide of the cannabinoid receptor CNR1. Involved in amyloid-beta metabolism by catalyzing degradation of Amyloid-beta protein 40 and Amyloid-beta protein 42 peptides, thereby preventing plaque formation. Catalyzes cleavage of cholecystokinin (maturation of Cholecystokinin-8 and Cholecystokinin-5) and Gonadoliberin-1 (both maturation and degradation) hormones. Degradation of hemoregulatory peptide N-acetyl-SDKP (AcSDKP) and amyloid-beta proteins is mediated by the N-terminal catalytic domain, while angiotensin I and cholecystokinin cleavage is mediated by the C-terminal catalytic region. Its function is as follows. Soluble form that is released in blood plasma and other body fluids following proteolytic cleavage in the juxtamembrane stalk region. Isoform produced by alternative promoter usage that is specifically expressed in spermatocytes and adult testis, and which is required for male fertility. In contrast to somatic isoforms, only contains one catalytic domain. Acts as a dipeptidyl carboxypeptidase that removes dipeptides from the C-terminus of substrates. The identity of substrates that are needed for male fertility is unknown. May also have a glycosidase activity which releases GPI-anchored proteins from the membrane by cleaving the mannose linkage in the GPI moiety. The GPIase activity was reported to be essential for the egg-binding ability of the sperm. This activity is however unclear and has been challenged by other groups, suggesting that it may be indirect. The protein is Angiotensin-converting enzyme of Rattus norvegicus (Rat).